A 337-amino-acid polypeptide reads, in one-letter code: Phosphate acyltransferase (337 aa).

This sequence belongs to the PlsX family. Homodimer. Probably interacts with PlsY.

Its subcellular location is the cytoplasm. The enzyme catalyses a fatty acyl-[ACP] + phosphate = an acyl phosphate + holo-[ACP]. It participates in lipid metabolism; phospholipid metabolism. Its function is as follows. Catalyzes the reversible formation of acyl-phosphate (acyl-PO(4)) from acyl-[acyl-carrier-protein] (acyl-ACP). This enzyme utilizes acyl-ACP as fatty acyl donor, but not acyl-CoA. The polypeptide is Phosphate acyltransferase (Aquifex aeolicus (strain VF5)).